A 392-amino-acid chain; its full sequence is 25S rRNA (adenine(645)-N(1))-methyltransferase (392 aa).

The tract at residues 1 to 96 (MALFNVEGWS…RKHDEEAPLM (96 aa)) is disordered. The span at 27–38 (KDKKKNNRKNGK) shows a compositional bias: basic residues. The stretch at 32–61 (NNRKNGKLTREQKLKEETEAELKEQVEDIP) forms a coiled coil. A compositionally biased stretch (basic and acidic residues) spans 39–57 (LTREQKLKEETEAELKEQV). Phosphoserine is present on serine 62. Basic and acidic residues predominate over residues 69–92 (DIPKKNQEKSDQNETSKKRKHDEE). S-adenosyl-L-methionine is bound by residues histidine 156, glycine 207, aspartate 242, aspartate 254, and cysteine 271. A coiled-coil region spans residues 344–382 (AEIIEERRQKLERRQKFIEVETEKEELEKKRRKIAEGKW).

This sequence belongs to the methyltransferase superfamily. RRP8 family.

It is found in the nucleus. It localises to the nucleolus. The protein resides in the chromosome. Its subcellular location is the telomere. It carries out the reaction adenosine(645) in 25S rRNA + S-adenosyl-L-methionine = N(1)-methyladenosine(645) in 25S rRNA + S-adenosyl-L-homocysteine + H(+). Its function is as follows. S-adenosyl-L-methionine-dependent methyltransferase that specifically methylates the N(1) position of adenine 645 in 25S rRNA. Required both for ribosomal 40S and 60S subunits biogenesis. Required for efficient pre-rRNA cleavage at site A2. Also involved in telomere length regulation and maintenance. The chain is 25S rRNA (adenine(645)-N(1))-methyltransferase (RRP8) from Saccharomyces cerevisiae (strain ATCC 204508 / S288c) (Baker's yeast).